Here is a 385-residue protein sequence, read N- to C-terminus: Lipid-A-disaccharide synthase (385 aa).

Belongs to the LpxB family.

The catalysed reaction is a lipid X + a UDP-2-N,3-O-bis[(3R)-3-hydroxyacyl]-alpha-D-glucosamine = a lipid A disaccharide + UDP + H(+). It participates in bacterial outer membrane biogenesis; LPS lipid A biosynthesis. Functionally, condensation of UDP-2,3-diacylglucosamine and 2,3-diacylglucosamine-1-phosphate to form lipid A disaccharide, a precursor of lipid A, a phosphorylated glycolipid that anchors the lipopolysaccharide to the outer membrane of the cell. This is Lipid-A-disaccharide synthase from Rickettsia canadensis (strain McKiel).